The primary structure comprises 224 residues: Giant hemoglobin linker AV-1 chain (224 aa).

An LDL-receptor class A domain is found at 62–103; that stretch reads HWCPSKYHRCGNSPQCMSNMAFCDGVNDCKNHFDEDENRCVV. 3 disulfide bridges follow: Cys64–Cys77, Cys71–Cys90, and Cys84–Cys101. An N-linked (GlcNAc...) asparagine glycan is attached at Asn108.

In terms of assembly, giant hemoglobin is composed of four heme-containing chains (AI to AIV), and two linker chains (AV and AVI).

Its function is as follows. Acts as a linker for the assembly of heme-containing chains in the construction of giant hemoglobin. This chain is Giant hemoglobin linker AV-1 chain, found in Lamellibrachia sp. (Deep-sea giant tube worm).